The primary structure comprises 248 residues: Probable transcriptional regulatory protein BRADO1143 (248 aa).

It belongs to the TACO1 family.

It is found in the cytoplasm. The polypeptide is Probable transcriptional regulatory protein BRADO1143 (Bradyrhizobium sp. (strain ORS 278)).